Here is a 55-residue protein sequence, read N- to C-terminus: Small integral membrane protein 27 (55 aa).

Residues 11 to 31 (WIYSVLLLAIVLISWGCIIYA) traverse the membrane as a helical segment.

The protein localises to the membrane. In Homo sapiens (Human), this protein is Small integral membrane protein 27.